Here is a 746-residue protein sequence, read N- to C-terminus: Exocyst complex component 3-like protein (746 aa).

The disordered stretch occupies residues methionine 1–glutamate 23. The tract at residues methionine 1–threonine 370 is mediates interaction with EXOC2, EXOC4 and EXOC5.

This sequence belongs to the SEC6 family. As to quaternary structure, interacts with EXOC2, EXOC4 and EXOC5; may be part of the exocyst.

It localises to the cytoplasmic vesicle. The protein resides in the secretory vesicle. In terms of biological role, as part of the exocyst, may play a role in regulated exocytosis of insulin granules. The sequence is that of Exocyst complex component 3-like protein (EXOC3L1) from Homo sapiens (Human).